Consider the following 694-residue polypeptide: MMAAAAGEGEAEVTREVISVSTEKAFEGKALPAWSEQITVRSLVVSAVLGTFLSFIVMKLNLTSGIVPSLNVSAGLLAFFLMKTWTSALERCGVFPKPFTRQENTVVQTCVISCSSIAFSGGFGTYILGMSKKIAEGFDEAEAKTSINVEEPSLGRLIAFLFLVSFVGLFSIVPLRKIMIISYKLTYPSGSATAHLINSFHTPQGAIQAKHQVSILFKSFVGSFLWSLFQWFYAAGPGCGFSSFPTFGMVAYSRRFYFDFSATYVGVGMICPYIINFSLLIGSVVSWGIMWPYIESKKGSWYDAGLPKSSLHGLNGYQVFISIAMIVGDGLFNFFSIVLRTAYDLYLKRRGGASKQPQETPFAGATGTERQVLSFDDRRRTQVFLKDQIPTTIAAAAYVLLAAISVVAIPHIFRQLRPKHVVWAYVVAPLFAFCNAYGTGLTDWSLSSSYGKLAIFIFGANIGAKDGGVVAGLAACGLMMGIVSTASDLVQDFKTGYLTLTSPRSMFVSQVLGTGMGCIISPMVFWMFYKANNIGMEEGFPAPYAKIYRGIALLGVNGWDQLPRYCLRFCLAFFLLAIAICALKEVAKQRGWWIQDFIPSALGMAVPFFLGSFFTIDMCVGSLVLFLWSRSDPVRAHTFAPAVASGLICGDGIWSLPSSILSLANVNPPMCMRVFSTATNDKVQLFLRTLPTPP.

The next 14 membrane-spanning stretches (helical) occupy residues 38-58 (ITVRSLVVSAVLGTFLSFIVM), 62-82 (LTSGIVPSLNVSAGLLAFFLM), 110-130 (CVISCSSIAFSGGFGTYILGM), 154-174 (LGRLIAFLFLVSFVGLFSIVP), 215-235 (ILFKSFVGSFLWSLFQWFYAA), 265-285 (VGVGMICPYIINFSLLIGSVV), 319-339 (VFISIAMIVGDGLFNFFSIVL), 393-413 (IAAAAYVLLAAISVVAIPHIF), 421-441 (VVWAYVVAPLFAFCNAYGTGL), 467-487 (GGVVAGLAACGLMMGIVSTAS), 506-526 (MFVSQVLGTGMGCIISPMVFW), 567-587 (LRFCLAFFLLAIAICALKEVA), 608-628 (FFLGSFFTIDMCVGSLVLFLW), and 643-663 (VASGLICGDGIWSLPSSILSL).

This sequence belongs to the YSL (TC 2.A.67.2) family. In terms of tissue distribution, expressed in root epidermis and exoderm.

Its subcellular location is the membrane. Functionally, may be involved in the transport of nicotianamine-chelated metals. This chain is Probable metal-nicotianamine transporter YSL8 (YSL8), found in Oryza sativa subsp. japonica (Rice).